Consider the following 167-residue polypeptide: S-ribosylhomocysteine lyase (167 aa).

Positions 54, 58, and 128 each coordinate Fe cation.

It belongs to the LuxS family. In terms of assembly, homodimer. It depends on Fe cation as a cofactor.

It carries out the reaction S-(5-deoxy-D-ribos-5-yl)-L-homocysteine = (S)-4,5-dihydroxypentane-2,3-dione + L-homocysteine. Functionally, involved in the synthesis of autoinducer 2 (AI-2) which is secreted by bacteria and is used to communicate both the cell density and the metabolic potential of the environment. The regulation of gene expression in response to changes in cell density is called quorum sensing. Catalyzes the transformation of S-ribosylhomocysteine (RHC) to homocysteine (HC) and 4,5-dihydroxy-2,3-pentadione (DPD). This Haemophilus influenzae (strain PittEE) protein is S-ribosylhomocysteine lyase.